The sequence spans 208 residues: Thymidylate kinase (208 aa).

7-14 (GIDGAGKT) contributes to the ATP binding site.

It belongs to the thymidylate kinase family.

It catalyses the reaction dTMP + ATP = dTDP + ADP. In terms of biological role, phosphorylation of dTMP to form dTDP in both de novo and salvage pathways of dTTP synthesis. This Xylella fastidiosa (strain Temecula1 / ATCC 700964) protein is Thymidylate kinase.